A 334-amino-acid chain; its full sequence is Probable allantoicase (334 aa).

This sequence belongs to the allantoicase family.

The catalysed reaction is allantoate + H2O = (S)-ureidoglycolate + urea. It participates in nitrogen metabolism; (S)-allantoin degradation; (S)-ureidoglycolate from allantoate (aminidohydrolase route): step 1/1. The polypeptide is Probable allantoicase (Acinetobacter baylyi (strain ATCC 33305 / BD413 / ADP1)).